The sequence spans 488 residues: Endo-1,6-beta-D-glucanase neg1 (488 aa).

The N-terminal stretch at 1–17 (MRISVGALLGLTALSHA) is a signal peptide. The active-site Proton donor is the Glu-241. The active-site Nucleophile is Glu-337. N-linked (GlcNAc...) asparagine glycosylation is present at Asn-422.

Belongs to the glycosyl hydrolase 30 family.

The protein resides in the secreted. The enzyme catalyses Random hydrolysis of (1-&gt;6)-linkages in (1-&gt;6)-beta-D-glucans.. Endoglucanase that has highest activity on the linear beta-1,6-glucan pustulan and lower activity against laminarin (beta-1,3-glucans with beta-1,6-branches). Is active on C.albicans cell walls allowing the release of a previously described cell wall proteins. This Aspergillus fumigatus (strain ATCC MYA-4609 / CBS 101355 / FGSC A1100 / Af293) (Neosartorya fumigata) protein is Endo-1,6-beta-D-glucanase neg1.